Consider the following 220-residue polypeptide: FMN-dependent NADH:quinone oxidoreductase (220 aa).

Residues S10, S17–S19, and S136–G139 contribute to the FMN site. Residues H200–R220 are disordered.

It belongs to the azoreductase type 1 family. As to quaternary structure, homodimer. FMN serves as cofactor.

It carries out the reaction 2 a quinone + NADH + H(+) = 2 a 1,4-benzosemiquinone + NAD(+). The enzyme catalyses N,N-dimethyl-1,4-phenylenediamine + anthranilate + 2 NAD(+) = 2-(4-dimethylaminophenyl)diazenylbenzoate + 2 NADH + 2 H(+). Quinone reductase that provides resistance to thiol-specific stress caused by electrophilic quinones. In terms of biological role, also exhibits azoreductase activity. Catalyzes the reductive cleavage of the azo bond in aromatic azo compounds to the corresponding amines. This Streptomyces coelicolor (strain ATCC BAA-471 / A3(2) / M145) protein is FMN-dependent NADH:quinone oxidoreductase.